The sequence spans 204 residues: Guanylate kinase (204 aa).

The Guanylate kinase-like domain occupies Pro-18–Ile-196. Ala-25 to Thr-32 is a binding site for ATP.

Belongs to the guanylate kinase family.

The protein localises to the cytoplasm. The enzyme catalyses GMP + ATP = GDP + ADP. In terms of biological role, essential for recycling GMP and indirectly, cGMP. This chain is Guanylate kinase, found in Chlamydia caviae (strain ATCC VR-813 / DSM 19441 / 03DC25 / GPIC) (Chlamydophila caviae).